The sequence spans 323 residues: Aspartate carbamoyltransferase catalytic subunit (323 aa).

Residues Arg-71 and Thr-72 each coordinate carbamoyl phosphate. Lys-99 serves as a coordination point for L-aspartate. Arg-121, His-151, and Gln-154 together coordinate carbamoyl phosphate. L-aspartate is bound by residues Arg-184 and Arg-239. Residues Gly-280 and Pro-281 each coordinate carbamoyl phosphate.

This sequence belongs to the aspartate/ornithine carbamoyltransferase superfamily. ATCase family. Heterododecamer (2C3:3R2) of six catalytic PyrB chains organized as two trimers (C3), and six regulatory PyrI chains organized as three dimers (R2).

The enzyme catalyses carbamoyl phosphate + L-aspartate = N-carbamoyl-L-aspartate + phosphate + H(+). Its pathway is pyrimidine metabolism; UMP biosynthesis via de novo pathway; (S)-dihydroorotate from bicarbonate: step 2/3. Its function is as follows. Catalyzes the condensation of carbamoyl phosphate and aspartate to form carbamoyl aspartate and inorganic phosphate, the committed step in the de novo pyrimidine nucleotide biosynthesis pathway. The protein is Aspartate carbamoyltransferase catalytic subunit of Cupriavidus taiwanensis (strain DSM 17343 / BCRC 17206 / CCUG 44338 / CIP 107171 / LMG 19424 / R1) (Ralstonia taiwanensis (strain LMG 19424)).